Consider the following 51-residue polypeptide: Lantibiotic streptococcin A-M49 (51 aa).

Residues 1 to 25 (MTKEHEIINSIQEVSLEELDQIIGA) constitute a propeptide that is removed on maturation. 2 cross-links (beta-methyllanthionine (Thr-Cys)) span residues 33-38 (TISHEC) and 42-50 (TWAFLATCC). Residues 35–49 (SHECHLNTWAFLATC) constitute a cross-link (lanthionine (Ser-Cys)). Thr-48 carries the 2,3-didehydrobutyrine modification.

Belongs to the type A lantibiotic family. Post-translationally, maturation of lantibiotics involves the enzymatic conversion of Thr, and Ser into dehydrated AA and the formation of thioether bonds with cysteine. This is followed by membrane translocation and cleavage of the modified precursor.

The protein localises to the secreted. Its subcellular location is the cell surface. In terms of biological role, lanthionine-containing peptide antibiotic (lantibiotic) active on certain Gram-positive bacteria. The bactericidal activity of lantibiotics is based on depolarization of energized bacterial cytoplasmic membranes, initiated by the formation of aqueous transmembrane pores. The polypeptide is Lantibiotic streptococcin A-M49 (scnA') (Streptococcus pyogenes serotype M49).